The primary structure comprises 654 residues: MQKEEAKELIKSLVEKINQWNYEYYQLNKPSVSDLEYDKALLELEKLEKEHPDLILSNSPTFRIGSFASEKFTKFVYQKPMLSLAKAYNYDDINSFINNISKIVPTENINFNIEPKIDGLSIALRYKQGKLVKAATRGDGSEGEDVTENIYQIKSIPKLINYFNDLEVRGEVFITKNDFKKINESNNFANARNAASGTLRQLDANIVAERNLSAFLYEIVEPEKHGIYYQHEALEFMKNLDFPTNPFSKVVEIEELEESISDFAEIKNKLDYDADGLVIKLNDLQMWDKLGKTSKFPKHSIAFKYDVEVASSRITDILTSVGRTGKITYIANILPVLLNQTTVKAATLHNHNFIKDMNININDEVNIIKAGEIIPKVISLKEEKNYVDYYKKATNCPSCGSQLVEFEGIVDQFCTNDECPDKNINNIYHFASRNCLNIVGLGLSTVKDFYPKFIKNIKDIFDLHKYRAELIKLPRYRDLKVDNILNSIESAKNKKFSKVIFALGIKHIGQRAAKLIADNYANFAELLDDHNLLKLQNTKNIGPKIIESLIEFISSPANQDLLAFLDAIFNYEGKAKVISTILSGYTFVITGVLSEPRSHFVKLIEEHSGNVSSAISSKTSYLLAGSDAGSKLEKAYKTGTKVINEEQFYDLIKQ.

Residues 34-38 (DLEYD), 83-84 (SL), and Glu114 each bind NAD(+). The active-site N6-AMP-lysine intermediate is Lys116. NAD(+)-binding residues include Arg137, Glu171, Lys280, and Lys304. The Zn(2+) site is built by Cys396, Cys399, Cys414, and Cys419. The 78-residue stretch at 577 to 654 (VISTILSGYT…EEQFYDLIKQ (78 aa)) folds into the BRCT domain.

It belongs to the NAD-dependent DNA ligase family. LigA subfamily. Requires Mg(2+) as cofactor. Mn(2+) serves as cofactor.

It catalyses the reaction NAD(+) + (deoxyribonucleotide)n-3'-hydroxyl + 5'-phospho-(deoxyribonucleotide)m = (deoxyribonucleotide)n+m + AMP + beta-nicotinamide D-nucleotide.. Functionally, DNA ligase that catalyzes the formation of phosphodiester linkages between 5'-phosphoryl and 3'-hydroxyl groups in double-stranded DNA using NAD as a coenzyme and as the energy source for the reaction. It is essential for DNA replication and repair of damaged DNA. The chain is DNA ligase from Mycoplasmopsis agalactiae (strain NCTC 10123 / CIP 59.7 / PG2) (Mycoplasma agalactiae).